Consider the following 265-residue polypeptide: 3-methyl-2-oxobutanoate hydroxymethyltransferase (265 aa).

The Mg(2+) site is built by aspartate 43 and aspartate 82. 3-methyl-2-oxobutanoate contacts are provided by residues 43-44 (DS), aspartate 82, and lysine 111. Glutamate 113 is a Mg(2+) binding site. The Proton acceptor role is filled by glutamate 180.

It belongs to the PanB family. In terms of assembly, homodecamer; pentamer of dimers. Mg(2+) serves as cofactor.

It is found in the cytoplasm. The enzyme catalyses 3-methyl-2-oxobutanoate + (6R)-5,10-methylene-5,6,7,8-tetrahydrofolate + H2O = 2-dehydropantoate + (6S)-5,6,7,8-tetrahydrofolate. It functions in the pathway cofactor biosynthesis; (R)-pantothenate biosynthesis; (R)-pantoate from 3-methyl-2-oxobutanoate: step 1/2. In terms of biological role, catalyzes the reversible reaction in which hydroxymethyl group from 5,10-methylenetetrahydrofolate is transferred onto alpha-ketoisovalerate to form ketopantoate. The protein is 3-methyl-2-oxobutanoate hydroxymethyltransferase of Francisella tularensis subsp. novicida (strain U112).